Consider the following 757-residue polypeptide: Probable serine/threonine-protein kinase pknA2 (757 aa).

The 261-residue stretch at 14–274 (YRIVRNIAEG…DGAAAAEELS (261 aa)) folds into the Protein kinase domain. ATP-binding positions include 20-28 (IAEGGMATV) and lysine 43. Aspartate 140 (proton acceptor) is an active-site residue. Residues 344-387 (DTGGAADVNPPAPPVAPTTALDSSTPADASAPHKTQIMAQSGSE) are disordered. 3 PASTA domains span residues 466 to 539 (DANA…VVSK), 545 to 614 (TIPK…TLSK), and 615 to 681 (GPMP…VISK).

Belongs to the protein kinase superfamily. Ser/Thr protein kinase family.

It carries out the reaction L-seryl-[protein] + ATP = O-phospho-L-seryl-[protein] + ADP + H(+). The catalysed reaction is L-threonyl-[protein] + ATP = O-phospho-L-threonyl-[protein] + ADP + H(+). This is Probable serine/threonine-protein kinase pknA2 (pknA2) from Bifidobacterium longum (strain NCC 2705).